The primary structure comprises 739 residues: NAD(P)H-quinone oxidoreductase subunit 5, chloroplastic (739 aa).

16 helical membrane passes run 9–29 (WVIP…LILI), 39–59 (IWAF…VQLS), 89–109 (IDPL…LVLI), 125–145 (FVYI…SNLI), 147–167 (IYFF…FWFT), 185–205 (GDFG…SLEF), 219–239 (NGIN…GAVA), 258–278 (TPIS…FLLA), 280–300 (LLPL…VGTI), 327–347 (LGYM…FHLI), 354–374 (ALLF…VGYS), 396–416 (TTFL…CFWS), 425–445 (WLYS…TAFY), 542–562 (LFPL…GISF), 610–630 (TLAI…YSFF), and 719–739 (ISSY…FFLS).

The protein belongs to the complex I subunit 5 family. In terms of assembly, NDH is composed of at least 16 different subunits, 5 of which are encoded in the nucleus.

It localises to the plastid. Its subcellular location is the chloroplast thylakoid membrane. It carries out the reaction a plastoquinone + NADH + (n+1) H(+)(in) = a plastoquinol + NAD(+) + n H(+)(out). It catalyses the reaction a plastoquinone + NADPH + (n+1) H(+)(in) = a plastoquinol + NADP(+) + n H(+)(out). Functionally, NDH shuttles electrons from NAD(P)H:plastoquinone, via FMN and iron-sulfur (Fe-S) centers, to quinones in the photosynthetic chain and possibly in a chloroplast respiratory chain. The immediate electron acceptor for the enzyme in this species is believed to be plastoquinone. Couples the redox reaction to proton translocation, and thus conserves the redox energy in a proton gradient. This Hordeum vulgare (Barley) protein is NAD(P)H-quinone oxidoreductase subunit 5, chloroplastic (ndhF).